We begin with the raw amino-acid sequence, 212 residues long: Protein-L-isoaspartate O-methyltransferase (212 aa).

Residue S61 is part of the active site.

Belongs to the methyltransferase superfamily. L-isoaspartyl/D-aspartyl protein methyltransferase family.

The protein localises to the cytoplasm. It catalyses the reaction [protein]-L-isoaspartate + S-adenosyl-L-methionine = [protein]-L-isoaspartate alpha-methyl ester + S-adenosyl-L-homocysteine. Catalyzes the methyl esterification of L-isoaspartyl residues in peptides and proteins that result from spontaneous decomposition of normal L-aspartyl and L-asparaginyl residues. It plays a role in the repair and/or degradation of damaged proteins. The sequence is that of Protein-L-isoaspartate O-methyltransferase from Pseudoalteromonas atlantica (strain T6c / ATCC BAA-1087).